The sequence spans 51 residues: Sperm protamine P1 (51 aa).

The protein belongs to the protamine P1 family. Testis.

Its subcellular location is the nucleus. It localises to the chromosome. Functionally, protamines substitute for histones in the chromatin of sperm during the haploid phase of spermatogenesis. They compact sperm DNA into a highly condensed, stable and inactive complex. The protein is Sperm protamine P1 (PRM1) of Colobus guereza (Mantled guereza).